A 326-amino-acid polypeptide reads, in one-letter code: tRNA dimethylallyltransferase (326 aa).

Glycine 10–threonine 17 contributes to the ATP binding site. Threonine 12–threonine 17 serves as a coordination point for substrate. Positions aspartate 35–glutamine 38 are interaction with substrate tRNA.

Belongs to the IPP transferase family. Monomer. Requires Mg(2+) as cofactor.

The catalysed reaction is adenosine(37) in tRNA + dimethylallyl diphosphate = N(6)-dimethylallyladenosine(37) in tRNA + diphosphate. Catalyzes the transfer of a dimethylallyl group onto the adenine at position 37 in tRNAs that read codons beginning with uridine, leading to the formation of N6-(dimethylallyl)adenosine (i(6)A). This chain is tRNA dimethylallyltransferase, found in Dictyoglomus turgidum (strain DSM 6724 / Z-1310).